A 423-amino-acid chain; its full sequence is MNTLIQEAIKLVEAGETEKGLNTLSKAEKQLHDEDKAIAAQLYYEWGDVEKAISLISDLHDLYPNETELTNFYAELLIDIDEEEKALAVLETIPETDPSYPESLLLMADLYQMQGLFEVSEQKLFQAKSILDNEPVIDFALGELYFAQGAYAKAVQYFKTTAEEQSEIGGVNVHQRLAESLSASGEFEDAIPWYEKAVDENPDPNTIFGYGFTALQAGLVKTAIKQLSDLKELDPSYTSLYMPLSKSYEAEGMYEEALKTAKEGIRYDEYNKELFLYAAKMALKIGKSEEGKKLLQEALALDPGFVEALHTLLAVYHKEEDYDQIIDLIQEVRSYGEEDPKYNWYLASAYTELEQYEEAKQSFEAAYLHYREDRDFLYEYASFLLEEGLQKEALPLLKKVLEMDGANEELEETILRIEDEFSR.

TPR repeat units lie at residues 33-66, 67-100, 135-168, 171-204, 238-271, 272-305, 306-339, 340-373, and 374-407; these read DEDK…YPNE, TELT…DPSY, PVID…QSEI, VNVH…NPDP, TSLY…DEYN, KELF…DPGF, VEAL…GEED, PKYN…YRED, and RDFL…DGAN.

As to quaternary structure, interacts with the RNA polymerase core.

The polypeptide is TPR repeat-containing protein YpiA (ypiA) (Bacillus subtilis (strain 168)).